A 288-amino-acid chain; its full sequence is ATP synthase gamma chain (288 aa).

It belongs to the ATPase gamma chain family. As to quaternary structure, F-type ATPases have 2 components, CF(1) - the catalytic core - and CF(0) - the membrane proton channel. CF(1) has five subunits: alpha(3), beta(3), gamma(1), delta(1), epsilon(1). CF(0) has three main subunits: a, b and c.

It localises to the cell inner membrane. Produces ATP from ADP in the presence of a proton gradient across the membrane. The gamma chain is believed to be important in regulating ATPase activity and the flow of protons through the CF(0) complex. This Aliivibrio salmonicida (strain LFI1238) (Vibrio salmonicida (strain LFI1238)) protein is ATP synthase gamma chain.